We begin with the raw amino-acid sequence, 184 residues long: Ribosome-recycling factor (184 aa).

A disordered region spans residues 134–167 (MNDQLKKDEKNGDITEDELRSGTEDVQKATDNSI).

This sequence belongs to the RRF family.

Its subcellular location is the cytoplasm. Responsible for the release of ribosomes from messenger RNA at the termination of protein biosynthesis. May increase the efficiency of translation by recycling ribosomes from one round of translation to another. The protein is Ribosome-recycling factor of Staphylococcus aureus (strain Mu3 / ATCC 700698).